The primary structure comprises 83 residues: MEVKIFAFLQIAVLIAFSLHLASAGSKELSGPESSENSIEAAFCDTNCTEGTDGVWSGCSAGCFCVHVGNSTVGRCMTFNGVD.

The signal sequence occupies residues 1–24; sequence MEVKIFAFLQIAVLIAFSLHLASA. 3 cysteine pairs are disulfide-bonded: C44–C63, C48–C65, and C59–C76. The N-linked (GlcNAc...) asparagine glycan is linked to N47. A glycan (N-linked (GlcNAc...) asparagine) is linked at N70.

The protein resides in the secreted. Its function is as follows. Salivary chemokine-binding protein which binds to host chemokines CXCL1, CXCL2, CXCL3, CXCL5, CXCL6, CXCL10, CXCL11 and CXCL13. The protein is Evasin P1090 of Ixodes ricinus (Common tick).